A 486-amino-acid polypeptide reads, in one-letter code: Probable FAD-binding monooxygenase ltbD (486 aa).

The segment at 186–243 (PAGDGGTNDQGPSRAQSTASSGGSGRPRSTESPQSGAQASTTPTSPPTTQSTGDDPAA) is disordered. Polar residues predominate over residues 194-206 (DQGPSRAQSTASS). Low complexity predominate over residues 220–241 (SGAQASTTPTSPPTTQSTGDDP).

The protein belongs to the FAD-binding monooxygenase family. In terms of assembly, homodimer. Requires FAD as cofactor.

Its function is as follows. Probable FAD-binding monooxygenase; part of the gene cluster that mediates the biosynthesis of luteodienoside A, a glycosylated polyketide consisting of an unusual 1-O-beta-D-glucopyranosyl-myo-inositol (glucinol) ester of 3-hydroxy-2,2,4-trimethylocta-4,6-dienoic acid. The HR-PKS ltbA produces the trimethylated polyketide chain from acetyl-CoA, malonyl-CoA and S-adenosylmethionine (SAM), and the ltbA cAT domain then uses glucinol produced by the glycosyltransferase ltbB as an offloading substrate to release luteodienoside A. Since ltbA and ltbB are sufficient for the biosynthesis of luteodienoside A, the functions of the methyltransferase ltbC and the FAD-binding monooxygenase ltbD within the pathway remain obscur. This is Probable FAD-binding monooxygenase ltbD from Aspergillus luteorubrus.